Reading from the N-terminus, the 362-residue chain is sn-glycerol-3-phosphate import ATP-binding protein UgpC (362 aa).

One can recognise an ABC transporter domain in the interval 4–235 (LKLQAVTKSY…PATLFVASFI (232 aa)). 37-44 (GPSGCGKS) is an ATP binding site.

The protein belongs to the ABC transporter superfamily. sn-glycerol-3-phosphate importer (TC 3.A.1.1.3) family. In terms of assembly, the complex is composed of two ATP-binding proteins (UgpC), two transmembrane proteins (UgpA and UgpE) and a solute-binding protein (UgpB).

Its subcellular location is the cell inner membrane. The catalysed reaction is sn-glycerol 3-phosphate(out) + ATP + H2O = sn-glycerol 3-phosphate(in) + ADP + phosphate + H(+). Its function is as follows. Part of the ABC transporter complex UgpBAEC involved in sn-glycerol-3-phosphate (G3P) import. Responsible for energy coupling to the transport system. This chain is sn-glycerol-3-phosphate import ATP-binding protein UgpC, found in Yersinia enterocolitica serotype O:8 / biotype 1B (strain NCTC 13174 / 8081).